We begin with the raw amino-acid sequence, 433 residues long: MRMVDLIEKKRDGHALTKEEIQFIIEGYTKGDIPDYQMSALAMAIFFRGMNEEETAELTMAMVHSGDTIDLSRIEGIKVDKHSTGGVGDTTTLVLGPLVASVGVPVAKMSGRGLGHTGGTIDKLESVPGFHVEITNDEFIDLVNKNKIAVVGQSGNLTPADKKLYALRDVTATVNSIPLIASSIMSKKIAAGADAIVLDVKTGVGAFMKDLNDAKALAKAMVDIGNRVGRKTMAIISDMSQPLGYAIGNALEVKEAIDTLKGEGPEDFQELCLVLGSHMVYLAEKASSLEEARHMLEKAMKDGSALQTFKTFLAAQGGDASVVDDPSKLPQAKYIIELEAKEDGYVSEIVADAVGTAAMWLGAGRATKESTIDLAVGLVLRKKVGDAVKKGESLVTIYSNREQVDDVKQKLYENIRISATPVQAPTLIYDKIS.

81 to 83 contributes to the phosphate binding site; that stretch reads KHS. Residues glycine 88 and threonine 90 each coordinate K(+). Phosphate is bound by residues threonine 92, 108-110, and threonine 120; that span reads KMS. The substrate site is built by arginine 168 and lysine 187. Positions 243, 246, and 255 each coordinate K(+).

Belongs to the thymidine/pyrimidine-nucleoside phosphorylase family. As to quaternary structure, homodimer. It depends on K(+) as a cofactor.

It carries out the reaction uridine + phosphate = alpha-D-ribose 1-phosphate + uracil. The enzyme catalyses thymidine + phosphate = 2-deoxy-alpha-D-ribose 1-phosphate + thymine. It catalyses the reaction 2'-deoxyuridine + phosphate = 2-deoxy-alpha-D-ribose 1-phosphate + uracil. Its function is as follows. Catalyzes phosphorolysis of the pyrimidine nucleosides uridine, thymidine and 2'-deoxyuridine with the formation of the corresponding pyrimidine base and ribose-1-phosphate. In Geobacillus stearothermophilus (Bacillus stearothermophilus), this protein is Pyrimidine-nucleoside phosphorylase (pdp).